The primary structure comprises 505 residues: MSNICQRLWEYLEPYLPCLSTEADKSTVIENPGALCSPQSQRHGHYFVALFDYQARTAEDLSFRAGDKLQVLDTLHEGWWFARHLEKRRDGSSQQLQGYIPSNYVAEDRSLQAEPWFFGAIGRSDAEKQLLYSENKTGSFLIRESESQKGEFSLSVLDGAVVKHYRIKRLDEGGFFLTRRRIFSTLNEFVSHYTKTSDGLCVKLGKPCLKIQVPAPFDLSYKTVDQWEIDRNSIQLLKRLGSGQFGEVWEGLWNNTTPVAVKTLKPGSMDPNDFLREAQIMKNLRHPKLIQLYAVCTLEDPIYIITELMRHGSLQEYLQNDTGSKIHLTQQVDMAAQVASGMAYLESRNYIHRDLAARNVLVGEHNIYKVADFGLARVFKVDNEDIYESRHEIKLPVKWTAPEAIRSNKFSIKSDVWSFGILLYEIITYGKMPYSGMTGAQVIQMLAQNYRLPQPSNCPQQFYNIMLECWNAEPKERPTFETLRWKLEDYFETDSSYSDANNFIR.

2 positions are modified to phosphoserine: serine 37 and serine 40. One can recognise an SH3 domain in the interval 42–110 (RHGHYFVALF…PSNYVAEDRS (69 aa)). One can recognise an SH2 domain in the interval 116-208 (WFFGAIGRSD…GLCVKLGKPC (93 aa)). Threonine 178 carries the phosphothreonine modification. Positions 234-491 (IQLLKRLGSG…TLRWKLEDYF (258 aa)) constitute a Protein kinase domain. Residues 240-248 (LGSGQFGEV) and lysine 262 contribute to the ATP site. Catalysis depends on aspartate 354, which acts as the Proton acceptor. Phosphotyrosine; by autocatalysis is present on tyrosine 387.

It belongs to the protein kinase superfamily. Tyr protein kinase family. SRC subfamily. In terms of assembly, interacts (via the SH3-domain) with PTEN. Interacts with RB1. Predominantly expressed in epithelial derived cell lines and tissues, especially normal liver, kidney, breast and colon.

It is found in the cytoplasm. It localises to the nucleus. The catalysed reaction is L-tyrosyl-[protein] + ATP = O-phospho-L-tyrosyl-[protein] + ADP + H(+). In terms of biological role, non-receptor tyrosine-protein kinase that negatively regulates cell proliferation. Positively regulates PTEN protein stability through phosphorylation of PTEN on 'Tyr-336', which in turn prevents its ubiquitination and degradation, possibly by reducing its binding to NEDD4. May function as a tumor suppressor. This is Tyrosine-protein kinase FRK (FRK) from Homo sapiens (Human).